Reading from the N-terminus, the 327-residue chain is Gibberellin 2-beta-dioxygenase 3 (327 aa).

The region spanning 173 to 278 is the Fe2OG dioxygenase domain; the sequence is GSDQVFRVNH…RVSFIYFGGP (106 aa). Tyr183 contributes to the 2-oxoglutarate binding site. The Fe cation site is built by His202, Asp204, and His259. Residues Arg269 and Ser271 each coordinate 2-oxoglutarate.

The protein belongs to the iron/ascorbate-dependent oxidoreductase family. GA2OX subfamily. L-ascorbate serves as cofactor. The cofactor is Fe(2+). Expressed in roots, shoot apex, leaf blades, leaf sheaths, stems and flowers.

It carries out the reaction gibberellin A1 + 2-oxoglutarate + O2 = gibberellin A8 + succinate + CO2. Functionally, catalyzes the 2-beta-hydroxylation of several biologically active gibberellins, leading to the homeostatic regulation of their endogenous level. Catabolism of gibberellins (GAs) plays a central role in plant development. In vitro, converts GA1, GA20, and GA29 to the corresponding 2-beta-hydroxylated products GA8, GA29-catabolite, respectively. This Oryza sativa subsp. japonica (Rice) protein is Gibberellin 2-beta-dioxygenase 3.